A 327-amino-acid polypeptide reads, in one-letter code: tRNA dimethylallyltransferase (327 aa).

ATP is bound at residue glycine 14–threonine 21. Substrate is bound at residue threonine 16–threonine 21. Interaction with substrate tRNA stretches follow at residues aspartate 39–leucine 42 and glutamine 163–arginine 167.

The protein belongs to the IPP transferase family. Monomer. It depends on Mg(2+) as a cofactor.

The enzyme catalyses adenosine(37) in tRNA + dimethylallyl diphosphate = N(6)-dimethylallyladenosine(37) in tRNA + diphosphate. Catalyzes the transfer of a dimethylallyl group onto the adenine at position 37 in tRNAs that read codons beginning with uridine, leading to the formation of N6-(dimethylallyl)adenosine (i(6)A). In Xanthomonas oryzae pv. oryzae (strain KACC10331 / KXO85), this protein is tRNA dimethylallyltransferase.